The chain runs to 793 residues: Flavin carrier protein 1 (793 aa).

The N-terminal stretch at 1-21 is a signal peptide; sequence MQVLVTLWCLICTCLVLPVAA. Topologically, residues 22–163 are lumenal; that stretch reads KKRTLTASSL…FFSNGKTVSQ (142 aa). Residue N143 is glycosylated (N-linked (GlcNAc...) asparagine). A helical membrane pass occupies residues 164 to 184; it reads IGVKWVTAVIAGIGLLTSAVL. The Cytoplasmic segment spans residues 185-194; sequence STFGNSTAAS. Residues 195 to 215 traverse the membrane as a helical segment; that stretch reads HISANTMSLFLYFQSVAVVAM. Over 216 to 223 the chain is Lumenal; sequence QHVDSVPP. Residues 224–244 form a helical membrane-spanning segment; that stretch reads IAAAWSENLAWSMGLIRITFM. The Cytoplasmic portion of the chain corresponds to 245 to 249; that stretch reads QKIFR. Residues 250–272 form a helical membrane-spanning segment; the sequence is WYVEATGGSASLYLTATTMSVLT. Residues 273–317 lie on the Lumenal side of the membrane; sequence QRGLDYLKNTSVYKRAENVLYGNSNTLIFRGIKRMGYRMKIENTA. A glycan (N-linked (GlcNAc...) asparagine) is linked at N281. A helical transmembrane segment spans residues 318-338; it reads IVCTGFTFFVLCGYFLAGFIM. Topologically, residues 339–372 are cytoplasmic; sequence ACKYSIELCIRCGWMRSDRFYQFRKNWRSVLKGS. A helical membrane pass occupies residues 373–393; the sequence is LLRYIYIGFTQLTILSFWEFT. The Lumenal segment spans residues 394-397; that stretch reads ERDS. Residues 398-418 form a helical membrane-spanning segment; it reads AGVIVIACLFIVLSCGLMAWA. Residues 419-461 lie on the Cytoplasmic side of the membrane; it reads AYRTIFFASKSVEMYNNPAALLYGDEYVLNKYGFFYTMFNAKH. The helical transmembrane segment at 462–482 threads the bilayer; sequence YWWNALLTTYILVKALFVGFA. The Lumenal portion of the chain corresponds to 483 to 484; it reads QA. Residues 485-505 traverse the membrane as a helical segment; sequence SGKTQALAIFIIDLAYFVAII. Topologically, residues 506-516 are cytoplasmic; it reads RYKPYLDRPTN. A helical transmembrane segment spans residues 517–537; sequence IVNIFICTVTLVNSFLFMFFS. Over 538–551 the chain is Lumenal; sequence NLFNQKYAVSAIMG. Residues 552-572 form a helical membrane-spanning segment; sequence WVFFIMNAAFSLLLLLMILAF. Residues 573–793 are Cytoplasmic-facing; that stretch reads TTIILFSKNP…KANILDPDYL (221 aa). Phosphoserine is present on S610. T626 is modified (phosphothreonine). Disordered regions lie at residues 649–674 and 689–731; these read YDDE…PTFS and KLGS…QESE. Residues 701 to 719 are compositionally biased toward polar residues; that stretch reads ITQQEVSPDRASSSPNSKS. Residues S771 and S774 each carry the phosphoserine modification.

Belongs to the transient receptor potential (TRP) ion channel family.

The protein localises to the endoplasmic reticulum membrane. In terms of biological role, may be responsible for the transport of FAD into the endoplasmic reticulum lumen, where it is required for oxidative protein folding. This chain is Flavin carrier protein 1 (FLC1), found in Saccharomyces cerevisiae (strain ATCC 204508 / S288c) (Baker's yeast).